A 267-amino-acid polypeptide reads, in one-letter code: Putative glycosyltransferase 63 (267 aa).

This sequence belongs to the glycosyltransferase group 1 family. Glycosyltransferase 4 subfamily.

The sequence is that of Putative glycosyltransferase 63 (SIFV0063) from Sulfolobus islandicus filamentous virus (isolate Iceland/Hveragerdi) (SIFV).